The primary structure comprises 266 residues: Energy-coupling factor transporter transmembrane protein EcfT 1 (266 aa).

The next 5 helical transmembrane spans lie at 33-53, 73-93, 107-127, 152-172, and 243-263; these read IGILFLANNWWTYALMVLFTL, LIWLILFTVVMQILFASGGTI, LLNGVFVFLRFVLIIIMSTVI, VPVNDIALMISVALRFIPTLM, and HFGDLIAACVMILLTAGLVIL.

The protein belongs to the energy-coupling factor EcfT family. As to quaternary structure, forms a stable energy-coupling factor (ECF) transporter complex composed of 2 membrane-embedded substrate-binding proteins (S component), 2 ATP-binding proteins (A component) and 2 transmembrane proteins (T component). May be able to interact with more than 1 S component at a time.

Its subcellular location is the cell membrane. Functionally, transmembrane (T) component of an energy-coupling factor (ECF) ABC-transporter complex. Unlike classic ABC transporters this ECF transporter provides the energy necessary to transport a number of different substrates. In Listeria monocytogenes serotype 1/2a (strain 08-5578), this protein is Energy-coupling factor transporter transmembrane protein EcfT 1.